A 151-amino-acid chain; its full sequence is Small ribosomal subunit protein uS15y (151 aa).

It belongs to the universal ribosomal protein uS15 family.

In Arabidopsis thaliana (Mouse-ear cress), this protein is Small ribosomal subunit protein uS15y (RPS13B).